We begin with the raw amino-acid sequence, 200 residues long: Large ribosomal subunit protein uL4 (200 aa).

Residues 45–64 form a disordered region; the sequence is QKTRAEVSGGGIKPWRQKGT.

Belongs to the universal ribosomal protein uL4 family. As to quaternary structure, part of the 50S ribosomal subunit.

In terms of biological role, one of the primary rRNA binding proteins, this protein initially binds near the 5'-end of the 23S rRNA. It is important during the early stages of 50S assembly. It makes multiple contacts with different domains of the 23S rRNA in the assembled 50S subunit and ribosome. Its function is as follows. Forms part of the polypeptide exit tunnel. This Psychrobacter cryohalolentis (strain ATCC BAA-1226 / DSM 17306 / VKM B-2378 / K5) protein is Large ribosomal subunit protein uL4.